Reading from the N-terminus, the 462-residue chain is Alkaline ceramidase TOD1 (462 aa).

Residues 1-18 lie on the Cytoplasmic side of the membrane; sequence MGKFITTTLSPPLYARSK. A helical transmembrane segment spans residues 19–39; sequence LLCFSLLYLFSTIFLFLYVSL. At 40-462 the chain is on the lumenal side; sequence SRNQCIFRYS…CKNYLTDMWG (423 aa). N-linked (GlcNAc...) asparagine glycosylation is found at N121, N132, and N449.

The protein belongs to the alkaline ceramidase family. In terms of tissue distribution, preferentially expressed in pollen grains, pollen tubes and silique guard cells, but barely detectable in roots, stems and leaves.

It localises to the golgi apparatus membrane. The catalysed reaction is an N-acylsphing-4-enine + H2O = sphing-4-enine + a fatty acid. It functions in the pathway lipid metabolism. Functionally, endoplasmic reticulum ceramidase that catalyzes the hydrolysis of ceramides into sphingosine and free fatty acids at alkaline pH (e.g. pH 9.5). Inactive on phytoceramide. Involved in the regulation of turgor pressure in guard cells and pollen tubes. The chain is Alkaline ceramidase TOD1 from Arabidopsis thaliana (Mouse-ear cress).